Here is a 119-residue protein sequence, read N- to C-terminus: Large ribosomal subunit protein uL18 (119 aa).

It belongs to the universal ribosomal protein uL18 family. Part of the 50S ribosomal subunit; part of the 5S rRNA/L5/L18/L25 subcomplex. Contacts the 5S and 23S rRNAs.

In terms of biological role, this is one of the proteins that bind and probably mediate the attachment of the 5S RNA into the large ribosomal subunit, where it forms part of the central protuberance. This Roseobacter denitrificans (strain ATCC 33942 / OCh 114) (Erythrobacter sp. (strain OCh 114)) protein is Large ribosomal subunit protein uL18.